The primary structure comprises 44 residues: Photosystem I reaction center subunit IX (44 aa).

Residues 7-27 (YLSVAPVLATLWFGSLAGLLI) form a helical membrane-spanning segment.

The protein belongs to the PsaJ family.

Its subcellular location is the plastid. It localises to the chloroplast thylakoid membrane. May help in the organization of the PsaE and PsaF subunits. The sequence is that of Photosystem I reaction center subunit IX from Piper cenocladum (Ant piper).